We begin with the raw amino-acid sequence, 440 residues long: MTTTRFAPSPTGYLHVGNLRTALFNYMIARKAGGTFILRIDDTDPERSKPEYVDAIQEDLTWLGLTWDRIEYQSRRLDRYAEAADALRAAGRFYEAFETPTELDLKRKKQLNMGRPPVYDRAALALSEDEKAALRAERGQGVWRFKLDHERITWTDGILGDISIDAASVSDPVLIRGDGQVLYTIASVVDDTEMGVTHVVRGSDHVTNTATQIQIMAALGHGHPEFAHHSLLTGPQGEALSKRLGTLALRDLRAEGIEPMALLSLMARLGSSQPVEVAGSLEALIEGFDLSTFGAAPTKFDRADLFPLTARLLHATPFAEVADEIAALGVPAAQAELFWEVARANITTRADLAGWWQLFRDGGAPLVAEEDRAFVADAFARLPEPPYGPETWGAWTAEVKAASGRKGKGLFMPLRKAVTGLERGPEMADVMRLLQKKPTL.

Residues Pro8–Asn18 carry the 'HIGH' region motif. Residues Ala239–Arg243 carry the 'KMSKS' region motif. Lys242 contributes to the ATP binding site.

It belongs to the class-I aminoacyl-tRNA synthetase family. Glutamate--tRNA ligase type 1 subfamily. Monomer.

The protein localises to the cytoplasm. It carries out the reaction tRNA(Glu) + L-glutamate + ATP = L-glutamyl-tRNA(Glu) + AMP + diphosphate. Functionally, catalyzes the attachment of glutamate to tRNA(Glu) in a two-step reaction: glutamate is first activated by ATP to form Glu-AMP and then transferred to the acceptor end of tRNA(Glu). This chain is Glutamate--tRNA ligase 2, found in Dinoroseobacter shibae (strain DSM 16493 / NCIMB 14021 / DFL 12).